A 311-amino-acid polypeptide reads, in one-letter code: tRNA dimethylallyltransferase (311 aa).

Residue Gly12–Thr19 coordinates ATP. Thr14 to Thr19 contributes to the substrate binding site. 2 interaction with substrate tRNA regions span residues Asp37 to Met40 and Gln161 to Arg165.

Belongs to the IPP transferase family. Monomer. It depends on Mg(2+) as a cofactor.

It carries out the reaction adenosine(37) in tRNA + dimethylallyl diphosphate = N(6)-dimethylallyladenosine(37) in tRNA + diphosphate. Its function is as follows. Catalyzes the transfer of a dimethylallyl group onto the adenine at position 37 in tRNAs that read codons beginning with uridine, leading to the formation of N6-(dimethylallyl)adenosine (i(6)A). This Coxiella burnetii (strain Dugway 5J108-111) protein is tRNA dimethylallyltransferase.